The chain runs to 197 residues: Tic20 family protein Ycf60 (197 aa).

5 consecutive transmembrane segments (helical) span residues isoleucine 3–valine 23, phenylalanine 47–leucine 66, leucine 81–phenylalanine 101, valine 118–leucine 138, and methionine 141–glycine 161.

This sequence belongs to the Tic20 family.

The protein localises to the plastid. It localises to the chloroplast membrane. The protein is Tic20 family protein Ycf60 (ycf60) of Cyanidioschyzon merolae (strain NIES-3377 / 10D) (Unicellular red alga).